The sequence spans 428 residues: Putative zinc metalloprotease SAR1238 (428 aa).

Histidine 21 is a binding site for Zn(2+). Residue glutamate 22 is part of the active site. Position 25 (histidine 25) interacts with Zn(2+). Transmembrane regions (helical) follow at residues phenylalanine 172–alanine 194, glycine 309–phenylalanine 331, isoleucine 352–isoleucine 374, and threonine 401–tryptophan 420. Positions alanine 186–lysine 269 constitute a PDZ domain.

This sequence belongs to the peptidase M50B family. Zn(2+) serves as cofactor.

Its subcellular location is the cell membrane. The sequence is that of Putative zinc metalloprotease SAR1238 from Staphylococcus aureus (strain MRSA252).